The following is a 348-amino-acid chain: Endoglucanase-6B (348 aa).

The substrate site is built by W52 and S54. Catalysis depends on proton donor residues D92 and D139. Positions 183, 186, 222, 282, 310, and 314 each coordinate substrate. Low complexity predominate over residues 222–241 (NYNPYSTSNPPPYTSGSPSP). The tract at residues 222-244 (NYNPYSTSNPPPYTSGSPSPDES) is disordered.

It belongs to the glycosyl hydrolase 6 (cellulase B) family. Monomer.

The enzyme catalyses Endohydrolysis of (1-&gt;4)-beta-D-glucosidic linkages in cellulose, lichenin and cereal beta-D-glucans.. In terms of biological role, plays a central role in the recycling of plant biomass. The biological conversion of cellulose to glucose generally requires three types of hydrolytic enzymes: (1) Endoglucanases which cut internal beta-1,4-glucosidic bonds; (2) Exocellobiohydrolases that cut the disaccharide cellobiose from the non-reducing end of the cellulose polymer chain; (3) Beta-1,4-glucosidases which hydrolyze the cellobiose and other short cello-oligosaccharides to glucose. In Humicola insolens (Soft-rot fungus), this protein is Endoglucanase-6B.